The sequence spans 659 residues: Delta(6)-protoilludene synthase (659 aa).

Mg(2+) contacts are provided by aspartate 91, asparagine 227, serine 231, and glutamate 235. A DDXXD motif motif is present at residues 91–95 (DEHTD). (2E,6E)-farnesyl diphosphate is bound by residues arginine 316 and tyrosine 317. A disordered region spans residues 528 to 586 (PQFSKTSGAPNGAHTPTTTNGSIKSNGFVSGDTNGHANGNGHVQTRSSTPSSSSSSTSS). Residues 530 to 573 (FSKTSGAPNGAHTPTTTNGSIKSNGFVSGDTNGHANGNGHVQTR) show a composition bias toward polar residues. Residues 574–586 (SSTPSSSSSSTSS) show a composition bias toward low complexity.

This sequence belongs to the terpene synthase family. Mg(2+) serves as cofactor.

It catalyses the reaction (2E,6E)-farnesyl diphosphate = Delta(6)-protoilludene + diphosphate. In terms of biological role, terpene cyclase that catalyzes the cyclization of farnesyl diphosphate (FPP) to delta(6)-protoilludene. This is Delta(6)-protoilludene synthase from Cyclocybe aegerita (Black poplar mushroom).